A 192-amino-acid polypeptide reads, in one-letter code: NF-kappa-B inhibitor-interacting Ras-like protein 1 (192 aa).

Position 11 to 18 (11 to 18 (GLLSVGKT)) interacts with GTP. Residues 35–43 (DCETMEDVY) carry the Effector region motif. Positions 58–93 (HLYDTRGLQEGVELPKHYFSFADGFVLVYSVNNLES) are interactions with NFKBIA and NFKBIB. Residues 61–65 (DTRGL) and 120–123 (NKID) each bind GTP. The segment at 168 to 192 (LSQPQSKSSFPLPGRKNKGNSSSEN) is disordered.

The protein belongs to the small GTPase superfamily. Ras family. KappaB-Ras subfamily. As to quaternary structure, interacts with both NF-kappa-B inhibitor alpha (NFKBIA) and beta (NFKBIB) in vitro. However, it probably only interacts with NFKBIB in vivo. Forms a complex with NFKBIB and NF-kappa-B heterodimer (p50/NFKB1 and p65/RELA). Also interacts with c-Rel (REL).

It is found in the cytoplasm. Atypical Ras-like protein that acts as a potent regulator of NF-kappa-B activity by preventing the degradation of NF-kappa-B inhibitor beta (NFKBIB) by most signals, explaining why NFKBIB is more resistant to degradation. May act by blocking phosphorylation of NFKBIB and mediating cytoplasmic retention of p65/RELA NF-kappa-B subunit. It is unclear whether it acts as a GTPase. Both GTP- and GDP-bound forms block phosphorylation of NFKBIB. This is NF-kappa-B inhibitor-interacting Ras-like protein 1 (NKIRAS1) from Macaca fascicularis (Crab-eating macaque).